Consider the following 167-residue polypeptide: Small ribosomal subunit protein uS5 (167 aa).

Positions 12–75 constitute an S5 DRBM domain; that stretch reads LQEKLVAVNR…EKARRNIVSV (64 aa).

The protein belongs to the universal ribosomal protein uS5 family. Part of the 30S ribosomal subunit. Contacts proteins S4 and S8.

Its function is as follows. With S4 and S12 plays an important role in translational accuracy. Functionally, located at the back of the 30S subunit body where it stabilizes the conformation of the head with respect to the body. The protein is Small ribosomal subunit protein uS5 of Shewanella loihica (strain ATCC BAA-1088 / PV-4).